Reading from the N-terminus, the 172-residue chain is 3-hydroxydecanoyl-[acyl-carrier-protein] dehydratase (172 aa).

His71 is a catalytic residue.

This sequence belongs to the thioester dehydratase family. FabA subfamily. As to quaternary structure, homodimer.

The protein resides in the cytoplasm. The catalysed reaction is a (3R)-hydroxyacyl-[ACP] = a (2E)-enoyl-[ACP] + H2O. It catalyses the reaction (3R)-hydroxydecanoyl-[ACP] = (2E)-decenoyl-[ACP] + H2O. It carries out the reaction (2E)-decenoyl-[ACP] = (3Z)-decenoyl-[ACP]. It participates in lipid metabolism; fatty acid biosynthesis. In terms of biological role, necessary for the introduction of cis unsaturation into fatty acids. Catalyzes the dehydration of (3R)-3-hydroxydecanoyl-ACP to E-(2)-decenoyl-ACP and then its isomerization to Z-(3)-decenoyl-ACP. Can catalyze the dehydratase reaction for beta-hydroxyacyl-ACPs with saturated chain lengths up to 16:0, being most active on intermediate chain length. This chain is 3-hydroxydecanoyl-[acyl-carrier-protein] dehydratase, found in Yersinia pseudotuberculosis serotype O:1b (strain IP 31758).